We begin with the raw amino-acid sequence, 534 residues long: Probable RNA-binding protein 46 (534 aa).

3 consecutive RRM domains span residues 61-139 (CEVF…VSLD), 141-223 (CRLF…WASP), and 236-308 (KVLY…LAKP).

The protein resides in the cytoplasm. In terms of biological role, essential for male and female fertility, playing a crucial role in regulating germ cell development by ensuring the proper progression of meiosis prophase I. The sequence is that of Probable RNA-binding protein 46 (rbm46) from Xenopus tropicalis (Western clawed frog).